Reading from the N-terminus, the 118-residue chain is Large ribosomal subunit protein bL20 (118 aa).

The protein belongs to the bacterial ribosomal protein bL20 family.

Its function is as follows. Binds directly to 23S ribosomal RNA and is necessary for the in vitro assembly process of the 50S ribosomal subunit. It is not involved in the protein synthesizing functions of that subunit. In Thermosipho melanesiensis (strain DSM 12029 / CIP 104789 / BI429), this protein is Large ribosomal subunit protein bL20.